Consider the following 596-residue polypeptide: Elongation factor 4 (596 aa).

The tr-type G domain occupies 2 to 183 (KNIRNFSIIA…EIIRRIPAPN (182 aa)). GTP contacts are provided by residues 14–19 (DHGKST) and 130–133 (NKID).

It belongs to the TRAFAC class translation factor GTPase superfamily. Classic translation factor GTPase family. LepA subfamily.

Its subcellular location is the cell inner membrane. It catalyses the reaction GTP + H2O = GDP + phosphate + H(+). Required for accurate and efficient protein synthesis under certain stress conditions. May act as a fidelity factor of the translation reaction, by catalyzing a one-codon backward translocation of tRNAs on improperly translocated ribosomes. Back-translocation proceeds from a post-translocation (POST) complex to a pre-translocation (PRE) complex, thus giving elongation factor G a second chance to translocate the tRNAs correctly. Binds to ribosomes in a GTP-dependent manner. The polypeptide is Elongation factor 4 (Wolinella succinogenes (strain ATCC 29543 / DSM 1740 / CCUG 13145 / JCM 31913 / LMG 7466 / NCTC 11488 / FDC 602W) (Vibrio succinogenes)).